The primary structure comprises 610 residues: MTIKFLSESTINRIAAGEVIERPASVVKELVENAVDASSTKIDIILERAGKNLIIISDDGIGMTDKELEIAVERHTTSKFDESDFLNINTFGFRGEALPSIAAISKMLITSKKRDADKAFQIKLIGGNEKQVTISVHNEGTKIEIRDLFFATPARLKFLRADKTELAATVGVVKKIALAHPKISFSLTHDGKNLLKLKGQNKDAETNLKQRIIDVIGDDFIKNAAYIDFKTPDFSICGYTSSPTYNRASSEDQFLFINNRPVKDKLLQIALRVAYQDYLARDRYPICAIFLQINPQLVDVNVHPAKAEVRFHDPDYVRNLLIEAIKNALTNKSHVTSTTIASDALELFKNPLVNKQSPVSKVINVNSKSADYRPTTHSTLNTVPQNHVCQKLIDTLSHAKIEQEVENRIEHEQQIRKQYKLGAAKAQLHTTYIISQTEDSIVITDQHAAHKRLGYEKIKHYLKTEELIKQRLLIPEIVELPNEKKADCLYDHREKLYKLGLTLEKFGEKSIIVTEIPNILGDVNVQKLIQDLADHLSDFGKNIALTELIEHVTETYACHYSIRAGRKLSADEMNALLRQMENTLLSGQCNHGRPTYIELKLKDIERLFGR.

The protein belongs to the DNA mismatch repair MutL/HexB family.

In terms of biological role, this protein is involved in the repair of mismatches in DNA. It is required for dam-dependent methyl-directed DNA mismatch repair. May act as a 'molecular matchmaker', a protein that promotes the formation of a stable complex between two or more DNA-binding proteins in an ATP-dependent manner without itself being part of a final effector complex. This chain is DNA mismatch repair protein MutL, found in Rickettsia rickettsii (strain Sheila Smith).